We begin with the raw amino-acid sequence, 86 residues long: MSSLDNTMKFTVPKEANTADVQETLTEVYKALQEKGYNPITQIVGYLLSGDPAFIPRHNNARSLIGKLERDKIIEELVTVYLSERK.

This sequence belongs to the UPF0297 family.

The sequence is that of UPF0297 protein BBR47_19030 from Brevibacillus brevis (strain 47 / JCM 6285 / NBRC 100599).